The following is a 346-amino-acid chain: Isopentenyl-diphosphate delta-isomerase (346 aa).

A substrate-binding site is contributed by 9–10 (RK). FMN-binding positions include Ser67, 68-70 (SMT), Ser98, and Asn127. 98–100 (SQR) is a binding site for substrate. Gln162 lines the substrate pocket. Glu163 is a binding site for Mg(2+). Residues Lys194, Thr224, 274–276 (GIR), and 295–296 (AA) each bind FMN.

It belongs to the IPP isomerase type 2 family. Homooctamer. Dimer of tetramers. Requires FMN as cofactor. NADPH serves as cofactor. It depends on Mg(2+) as a cofactor.

It is found in the cytoplasm. The catalysed reaction is isopentenyl diphosphate = dimethylallyl diphosphate. Involved in the biosynthesis of isoprenoids. Catalyzes the 1,3-allylic rearrangement of the homoallylic substrate isopentenyl (IPP) to its allylic isomer, dimethylallyl diphosphate (DMAPP). This chain is Isopentenyl-diphosphate delta-isomerase, found in Stutzerimonas stutzeri (strain A1501) (Pseudomonas stutzeri).